A 410-amino-acid polypeptide reads, in one-letter code: Dipeptidase ataJ (410 aa).

The Zn(2+) site is built by His-27, Asp-29, and Glu-138. His-165 contributes to the substrate binding site. Positions Thr-180–Arg-200 are disordered. Substrate is bound by residues Arg-258 and Asp-318.

Belongs to the metallo-dependent hydrolases superfamily. Peptidase M19 family. The cofactor is Zn(2+).

The enzyme catalyses an L-aminoacyl-L-amino acid + H2O = 2 an L-alpha-amino acid. It participates in mycotoxin biosynthesis. Its function is as follows. Dipeptidase; part of the gene cluster that mediates the biosynthesis of acetylaranotin, a member of the epipolythiodioxopiperazine (ETP) class of toxins characterized by a disulfide-bridged cyclic dipeptide. The first step of acetylaranotin biosynthesis is performed by the NRPS ataP which produces diketopiperazine cyclo-L-Phe-L-Phe via the condensation of 2 phenylalanines (L-Phe). The ataC domain of ataTC then catalyzes the formation of bishydroxylation of cyclo-L-Phe-L-Phe. The glutathione S-transferase domain ataG in ataIMG further catalyzes the conjugation of two glutathiones to the bishydroxylated intermediate. Next, the dipeptidase ataJ removes the Glu residues. The following step is performed by the carbon sulfur lyase domain ataI of ataIMG which may convert the bis-cysteinyl adduct to yield an epidithiol intermediate. The ataT domain from ataTC then catalyzes the oxidation of the free dithiols, followed by a cyclization step catalyzed by the cytochrome P450 ataF. AtaF probably acts as an epoxidase to promote a dual epoxidation formation at C8 and C9 along with C8' and C9', followed by the spontaneous nucleophilic attack of the amide nitrogens N10 and N10' to yield an intermediate with the pyrrolidine partial structure. The final steps of acetylaranotin biosynthesis involve the acetylation and ring rearrangement of an epitetrathiodiketopiperazine intermediate to produce acetylaranotin. AtaH probably catalyzes the acetylation of epitetrathiodiketopiperazine to produce a diacetate and ataY is responsible for the formation of the dihydrooxepin moiety that converts the diacetate intermediate to acetylaranotin via acetylapoaranotin. Both enzymes could function independently in the absence of the other. The acetylaranotin bis-thiomethyltransferase ataS located outside of acetylaranotin gene cluster is the main thiomethyltransferase responsible for converting acetylaranotin and its related intermediates to their methylated forms. The sequence is that of Dipeptidase ataJ from Aspergillus terreus (strain NIH 2624 / FGSC A1156).